We begin with the raw amino-acid sequence, 416 residues long: Phosphoglycerate kinase (416 aa).

Residues valine 23, aspartate 24, phenylalanine 25, asparagine 26, glutamine 39, arginine 40, serine 63, histidine 64, glycine 66, arginine 67, leucine 122, arginine 123, histidine 170, and arginine 171 each contribute to the (2R)-3-phosphoglycerate site. Residue glycine 214 participates in ADP binding. Position 214 (glycine 214) interacts with CDP. 2 residues coordinate AMP: alanine 215 and lysine 216. Alanine 215 provides a ligand contact to ATP. Alanine 215 contacts Mg(2+). Aspartate 219 lines the CDP pocket. A Mg(2+)-binding site is contributed by aspartate 219. Residue lysine 220 coordinates AMP. Lysine 220 lines the ATP pocket. Glycine 238 is an ADP binding site. Position 238 (glycine 238) interacts with CDP. Glycine 239 and glycine 312 together coordinate AMP. Residues glycine 239 and glycine 312 each contribute to the ATP site. 3 residues coordinate CDP: glycine 337, alanine 339, and phenylalanine 342. ADP is bound at residue phenylalanine 342. Glutamate 343 contacts AMP. Glutamate 343, aspartate 374, and threonine 375 together coordinate ATP. Residue aspartate 374 participates in Mg(2+) binding.

Belongs to the phosphoglycerate kinase family. Monomer. Mg(2+) is required as a cofactor.

The protein localises to the cytoplasm. It localises to the mitochondrion. The catalysed reaction is (2R)-3-phosphoglycerate + ATP = (2R)-3-phospho-glyceroyl phosphate + ADP. Its pathway is carbohydrate degradation; glycolysis; pyruvate from D-glyceraldehyde 3-phosphate: step 2/5. Its function is as follows. Catalyzes one of the two ATP producing reactions in the glycolytic pathway via the reversible conversion of 1,3-diphosphoglycerate to 3-phosphoglycerate. Both L- and D- forms of purine and pyrimidine nucleotides can be used as substrates, but the activity is much lower on pyrimidines. Negatively regulates the biosynthesis of acetyl-CoA from pyruvate in the mitochondrion. In Hypocrea jecorina (Trichoderma reesei), this protein is Phosphoglycerate kinase (pgk1).